We begin with the raw amino-acid sequence, 904 residues long: Pyrimidine pathway regulatory protein 1 (904 aa).

Residues 1 to 11 are compositionally biased toward basic residues; the sequence is MKQKKFNSKKS. A disordered region spans residues 1 to 27; that stretch reads MKQKKFNSKKSNRTDLSKRGDSPNIGI. Residues 12 to 21 are compositionally biased toward basic and acidic residues; the sequence is NRTDLSKRGD. Zn(2+) contacts are provided by Cys34, Cys37, Cys44, Cys51, Cys54, and Cys61. The segment at residues 34–61 is a DNA-binding region (zn(2)-C6 fungal-type); it reads CKRCRLKKIKCDQEFPSCKRCAKLEVPC. A disordered region spans residues 883–904; sequence GNEGESSYDISKGKNSESGGIF.

As to quaternary structure, binds DNA as a homodimer.

Its subcellular location is the nucleus. Its function is as follows. Positive regulator of URA1 and URA3 expression. The protein is Pyrimidine pathway regulatory protein 1 (PPR1) of Saccharomyces cerevisiae (strain ATCC 204508 / S288c) (Baker's yeast).